The sequence spans 215 residues: 3-isopropylmalate dehydratase small subunit (215 aa).

The protein belongs to the LeuD family. LeuD type 1 subfamily. In terms of assembly, heterodimer of LeuC and LeuD.

The enzyme catalyses (2R,3S)-3-isopropylmalate = (2S)-2-isopropylmalate. The protein operates within amino-acid biosynthesis; L-leucine biosynthesis; L-leucine from 3-methyl-2-oxobutanoate: step 2/4. In terms of biological role, catalyzes the isomerization between 2-isopropylmalate and 3-isopropylmalate, via the formation of 2-isopropylmaleate. The protein is 3-isopropylmalate dehydratase small subunit of Xylella fastidiosa (strain M12).